A 361-amino-acid chain; its full sequence is Histidinol-phosphate aminotransferase (361 aa).

The residue at position 223 (Lys223) is an N6-(pyridoxal phosphate)lysine.

The protein belongs to the class-II pyridoxal-phosphate-dependent aminotransferase family. Histidinol-phosphate aminotransferase subfamily. In terms of assembly, homodimer. Pyridoxal 5'-phosphate serves as cofactor.

The catalysed reaction is L-histidinol phosphate + 2-oxoglutarate = 3-(imidazol-4-yl)-2-oxopropyl phosphate + L-glutamate. Its pathway is amino-acid biosynthesis; L-histidine biosynthesis; L-histidine from 5-phospho-alpha-D-ribose 1-diphosphate: step 7/9. In Deinococcus radiodurans (strain ATCC 13939 / DSM 20539 / JCM 16871 / CCUG 27074 / LMG 4051 / NBRC 15346 / NCIMB 9279 / VKM B-1422 / R1), this protein is Histidinol-phosphate aminotransferase.